The sequence spans 60 residues: Large ribosomal subunit protein uL30 (60 aa).

Belongs to the universal ribosomal protein uL30 family. As to quaternary structure, part of the 50S ribosomal subunit.

The polypeptide is Large ribosomal subunit protein uL30 (Lachnoclostridium phytofermentans (strain ATCC 700394 / DSM 18823 / ISDg) (Clostridium phytofermentans)).